Consider the following 192-residue polypeptide: Large ribosomal subunit protein bL25 (192 aa).

The protein belongs to the bacterial ribosomal protein bL25 family. CTC subfamily. In terms of assembly, part of the 50S ribosomal subunit; part of the 5S rRNA/L5/L18/L25 subcomplex. Contacts the 5S rRNA. Binds to the 5S rRNA independently of L5 and L18.

Functionally, this is one of the proteins that binds to the 5S RNA in the ribosome where it forms part of the central protuberance. This chain is Large ribosomal subunit protein bL25, found in Porphyromonas gingivalis (strain ATCC 33277 / DSM 20709 / CIP 103683 / JCM 12257 / NCTC 11834 / 2561).